Here is a 60-residue protein sequence, read N- to C-terminus: Large ribosomal subunit protein uL30 (60 aa).

The protein belongs to the universal ribosomal protein uL30 family. As to quaternary structure, part of the 50S ribosomal subunit.

The sequence is that of Large ribosomal subunit protein uL30 from Pseudoalteromonas translucida (strain TAC 125).